Consider the following 644-residue polypeptide: Arginine--tRNA ligase (644 aa).

A 'HIGH' region motif is present at residues 134-144 (VNPTKPLHMGH).

It belongs to the class-I aminoacyl-tRNA synthetase family.

It is found in the cytoplasm. The enzyme catalyses tRNA(Arg) + L-arginine + ATP = L-arginyl-tRNA(Arg) + AMP + diphosphate. This Thermococcus sibiricus (strain DSM 12597 / MM 739) protein is Arginine--tRNA ligase.